We begin with the raw amino-acid sequence, 223 residues long: Cytotoxic T-lymphocyte protein 4 (223 aa).

Residues 1 to 35 form the signal peptide; it reads MACSGFQSHGAWLELTSRTWPCTALFSLLFIPVFS. Topologically, residues 38-161 are extracellular; it reads MHVAQPAVVL…IDPEPCPDSD (124 aa). In terms of domain architecture, Ig-like V-type spans 39-140; the sequence is HVAQPAVVLA…VELLYPPPYY (102 aa). The tract at residues 46–50 is homodimerization; sequence VLANS. Disulfide bonds link Cys58–Cys129 and Cys85–Cys103. N-linked (GlcNAc...) asparagine glycosylation occurs at Asn113. Residues 134-139 form an important for interaction with CD80 and CD86 region; sequence LYPPPY. Residue Asn145 is glycosylated (N-linked (GlcNAc...) asparagine). Positions 150 to 155 are homodimerization; it reads YVIDPE. Residues 162–182 form a helical membrane-spanning segment; it reads FLLWILAAVSSGLFFYSFLIT. At 183-223 the chain is on the cytoplasmic side; that stretch reads AVSLSKMLKKRSPLTTGVYVKMPPTEPECEKQFQPYFIPIN. Tyr201 carries the post-translational modification Phosphotyrosine; by TXK and JAK2.

In terms of assembly, homodimer; disulfide-linked. Binds to CD80/B7-1 and CD86/B7.2. Interacts with ICOSLG. N-glycosylation is important for dimerization. In terms of processing, phosphorylation at Tyr-201 prevents binding to the AP-2 adapter complex, blocks endocytosis, and leads to retention of CTLA4 on the cell surface.

It localises to the cell membrane. Functionally, inhibitory receptor acting as a major negative regulator of T-cell responses. The affinity of CTLA4 for its natural B7 family ligands, CD80 and CD86, is considerably stronger than the affinity of their cognate stimulatory coreceptor CD28. The sequence is that of Cytotoxic T-lymphocyte protein 4 (CTLA4) from Sus scrofa (Pig).